The primary structure comprises 110 residues: Ribonuclease P protein component 1 (110 aa).

Belongs to the eukaryotic/archaeal RNase P protein component 1 family. In terms of assembly, consists of a catalytic RNA component and at least 4-5 protein subunits.

The protein resides in the cytoplasm. The enzyme catalyses Endonucleolytic cleavage of RNA, removing 5'-extranucleotides from tRNA precursor.. Functionally, part of ribonuclease P, a protein complex that generates mature tRNA molecules by cleaving their 5'-ends. This Methanosarcina acetivorans (strain ATCC 35395 / DSM 2834 / JCM 12185 / C2A) protein is Ribonuclease P protein component 1.